Reading from the N-terminus, the 450-residue chain is Class E vacuolar protein-sorting machinery protein HSE1 (450 aa).

Residues alanine 15 to leucine 145 enclose the VHS domain. Disordered stretches follow at residues tryptophan 141–glutamate 167, phenylalanine 179–serine 212, and proline 374–tyrosine 450. Residues glutamate 147–glutamate 167 are compositionally biased toward basic and acidic residues. In terms of domain architecture, UIM spans aspartate 163–serine 182. Residues glutamine 184 to leucine 196 show a composition bias toward polar residues. Positions glutamine 197–glutamine 209 are enriched in low complexity. An SH3 domain is found at serine 212–glutamate 271. The span at asparagine 394–asparagine 432 shows a compositional bias: low complexity.

Belongs to the STAM family. Component of the ESCRT-0 complex composed of HSE1 and VPS27.

It is found in the endosome membrane. Functionally, component of the ESCRT-0 complex which is the sorting receptor for ubiquitinated cargo proteins at the multivesicular body (MVB). This is Class E vacuolar protein-sorting machinery protein HSE1 (HSE1) from Candida glabrata (strain ATCC 2001 / BCRC 20586 / JCM 3761 / NBRC 0622 / NRRL Y-65 / CBS 138) (Yeast).